Here is a 317-residue protein sequence, read N- to C-terminus: Periplasmic [NiFe] hydrogenase small subunit 1 (317 aa).

Residues 1–49 constitute a signal peptide (tat-type signal); that stretch reads MRFSVGLGKEGAEERLARRGVSRRDFLKFCTAIAVTMGMGPAFAPEVAR. C67, C70, C164, C200, H238, C241, C266, and C272 together coordinate [4Fe-4S] cluster. Residues C281, C299, and C302 each coordinate [3Fe-4S] cluster.

The protein belongs to the [NiFe]/[NiFeSe] hydrogenase small subunit family. Heterodimer of a large and a small subunit. It depends on [3Fe-4S] cluster as a cofactor. The cofactor is [4Fe-4S] cluster. In terms of processing, predicted to be exported by the Tat system. The position of the signal peptide cleavage has not been experimentally proven.

Its subcellular location is the periplasm. The enzyme catalyses 2 Fe(III)-[cytochrome c3] + H2 = 2 Fe(II)-[cytochrome c3] + 2 H(+). The polypeptide is Periplasmic [NiFe] hydrogenase small subunit 1 (hynB1) (Nitratidesulfovibrio vulgaris (strain ATCC 29579 / DSM 644 / CCUG 34227 / NCIMB 8303 / VKM B-1760 / Hildenborough) (Desulfovibrio vulgaris)).